The sequence spans 225 residues: tRNA (guanine-N(1)-)-methyltransferase (225 aa).

Residues Gly-112 and 132 to 137 contribute to the S-adenosyl-L-methionine site; that span reads IGDYVL.

Belongs to the RNA methyltransferase TrmD family. Homodimer.

The protein resides in the cytoplasm. It catalyses the reaction guanosine(37) in tRNA + S-adenosyl-L-methionine = N(1)-methylguanosine(37) in tRNA + S-adenosyl-L-homocysteine + H(+). In terms of biological role, specifically methylates guanosine-37 in various tRNAs. The chain is tRNA (guanine-N(1)-)-methyltransferase from Flavobacterium psychrophilum (strain ATCC 49511 / DSM 21280 / CIP 103535 / JIP02/86).